We begin with the raw amino-acid sequence, 122 residues long: Large ribosomal subunit protein uL14 (122 aa).

The protein belongs to the universal ribosomal protein uL14 family. Part of the 50S ribosomal subunit. Forms a cluster with proteins L3 and L19. In the 70S ribosome, L14 and L19 interact and together make contacts with the 16S rRNA in bridges B5 and B8.

Functionally, binds to 23S rRNA. Forms part of two intersubunit bridges in the 70S ribosome. The chain is Large ribosomal subunit protein uL14 from Clostridium botulinum (strain 657 / Type Ba4).